We begin with the raw amino-acid sequence, 103 residues long: Small ribosomal subunit protein bS18 (103 aa).

Over residues 1-19 (MSEERTERPERTERPERPQ) the composition is skewed to basic and acidic residues. A disordered region spans residues 1-33 (MSEERTERPERTERPERPQQRGSGPRKRRPFQR). Positions 24–33 (GPRKRRPFQR) are enriched in basic residues.

It belongs to the bacterial ribosomal protein bS18 family. As to quaternary structure, part of the 30S ribosomal subunit. Forms a tight heterodimer with protein bS6.

Functionally, binds as a heterodimer with protein bS6 to the central domain of the 16S rRNA, where it helps stabilize the platform of the 30S subunit. The sequence is that of Small ribosomal subunit protein bS18 from Geobacter sulfurreducens (strain ATCC 51573 / DSM 12127 / PCA).